Reading from the N-terminus, the 376-residue chain is uncharacterized protein (376 aa).

Residues 1–31 form the signal peptide; sequence MSRHKVYKAISSYVIIAIIIIAIVAVVGVLL. The segment at 37 to 57 is disordered; the sequence is SSSSVTSTTTPTTSSSVSPSS.

The protein belongs to the bacterial solute-binding protein 1 family. WtpA subfamily.

This is an uncharacterized protein from Sulfurisphaera tokodaii (strain DSM 16993 / JCM 10545 / NBRC 100140 / 7) (Sulfolobus tokodaii).